A 95-amino-acid chain; its full sequence is MRKYEIMYIIRPNMDDEARQALVERFNNVLKENGAEITNVTDWGKRRLAYEIQKYRDGYYMIVNVVSEPKAVQEFDRLARISEDIIRHIVVKEEE.

Belongs to the bacterial ribosomal protein bS6 family.

Binds together with bS18 to 16S ribosomal RNA. This is Small ribosomal subunit protein bS6 from Geobacillus kaustophilus (strain HTA426).